We begin with the raw amino-acid sequence, 37 residues long: U1-ectatotoxin-Eb1a subunit B (37 aa).

Belongs to the ectatomin family. Ectatomin-Eq subfamily. In terms of assembly, heterodimer of subunits A and B; disulfide-linked. Expressed by the venom gland.

Its subcellular location is the secreted. The protein resides in the target cell membrane. The polypeptide is U1-ectatotoxin-Eb1a subunit B (Ectatomma brunneum (Ant)).